A 534-amino-acid chain; its full sequence is Probable bifunctional tRNA threonylcarbamoyladenosine biosynthesis protein (534 aa).

The kae1 stretch occupies residues 1-325 (MLCLGIEGTA…YRTDEVDVPW (325 aa)). Fe cation contacts are provided by H108, H112, and Y129. Residues 129 to 133 (YVSGG), D161, G174, E178, and N258 contribute to the L-threonylcarbamoyladenylate site. D286 contributes to the Fe cation binding site. The region spanning 335-534 (LPPDILAKGA…EIESRGRYTD (200 aa)) is the Protein kinase domain. Residues 340-348 (LAKGAEANI) and K361 contribute to the ATP site. Catalysis depends on D451, which acts as the Proton acceptor; for kinase activity.

This sequence in the N-terminal section; belongs to the KAE1 / TsaD family. It in the C-terminal section; belongs to the protein kinase superfamily. Tyr protein kinase family. BUD32 subfamily. Component of the KEOPS complex that consists of Kae1, Bud32, Cgi121 and Pcc1; the whole complex dimerizes. Requires Fe(2+) as cofactor.

It localises to the cytoplasm. The catalysed reaction is L-seryl-[protein] + ATP = O-phospho-L-seryl-[protein] + ADP + H(+). It catalyses the reaction L-threonyl-[protein] + ATP = O-phospho-L-threonyl-[protein] + ADP + H(+). The enzyme catalyses L-threonylcarbamoyladenylate + adenosine(37) in tRNA = N(6)-L-threonylcarbamoyladenosine(37) in tRNA + AMP + H(+). Functionally, required for the formation of a threonylcarbamoyl group on adenosine at position 37 (t(6)A37) in tRNAs that read codons beginning with adenine. Is a component of the KEOPS complex that is probably involved in the transfer of the threonylcarbamoyl moiety of threonylcarbamoyl-AMP (TC-AMP) to the N6 group of A37. The Kae1 domain likely plays a direct catalytic role in this reaction. The Bud32 domain probably displays kinase activity that regulates Kae1 function. This chain is Probable bifunctional tRNA threonylcarbamoyladenosine biosynthesis protein, found in Methanothermobacter thermautotrophicus (strain ATCC 29096 / DSM 1053 / JCM 10044 / NBRC 100330 / Delta H) (Methanobacterium thermoautotrophicum).